Here is a 399-residue protein sequence, read N- to C-terminus: Xylose repressor (399 aa).

Residues 27-46 (RTKISKLVDLNKATVSNLTD) constitute a DNA-binding region (H-T-H motif).

The protein belongs to the ROK (NagC/XylR) family.

In terms of biological role, transcriptional repressor of xylose-utilizing enzymes. This Caldicellulosiruptor bescii (strain ATCC BAA-1888 / DSM 6725 / KCTC 15123 / Z-1320) (Anaerocellum thermophilum) protein is Xylose repressor (xylR).